We begin with the raw amino-acid sequence, 132 residues long: Small ribosomal subunit protein uS11 (132 aa).

This sequence belongs to the universal ribosomal protein uS11 family. In terms of assembly, part of the 30S ribosomal subunit. Interacts with proteins S7 and S18. Binds to IF-3.

Its function is as follows. Located on the platform of the 30S subunit, it bridges several disparate RNA helices of the 16S rRNA. Forms part of the Shine-Dalgarno cleft in the 70S ribosome. This chain is Small ribosomal subunit protein uS11, found in Chlamydia trachomatis serovar A (strain ATCC VR-571B / DSM 19440 / HAR-13).